Consider the following 878-residue polypeptide: DNA mismatch repair protein MutS (878 aa).

Position 630-637 (630-637 (GPNMAGKS)) interacts with ATP.

The protein belongs to the DNA mismatch repair MutS family.

Functionally, this protein is involved in the repair of mismatches in DNA. It is possible that it carries out the mismatch recognition step. This protein has a weak ATPase activity. The polypeptide is DNA mismatch repair protein MutS (Chlorobaculum tepidum (strain ATCC 49652 / DSM 12025 / NBRC 103806 / TLS) (Chlorobium tepidum)).